Reading from the N-terminus, the 261-residue chain is Proteasome subunit alpha type-4 (261 aa).

2 positions are modified to phosphoserine: S13 and S75. K127 carries the post-translational modification N6-acetyllysine. S173 is subject to Phosphoserine. The residue at position 176 (K176) is an N6-acetyllysine. Residues 240–261 (HEEEEAKAEREKKEKEQKEKDK) form a disordered region.

This sequence belongs to the peptidase T1A family. The 26S proteasome consists of a 20S proteasome core and two 19S regulatory subunits. The 20S proteasome core is a barrel-shaped complex made of 28 subunits that are arranged in four stacked rings. The two outer rings are each formed by seven alpha subunits, and the two inner rings are formed by seven beta subunits. The proteolytic activity is exerted by three beta-subunits PSMB5, PSMB6 and PSMB7.

The protein resides in the cytoplasm. It is found in the nucleus. In terms of biological role, component of the 20S core proteasome complex involved in the proteolytic degradation of most intracellular proteins. This complex plays numerous essential roles within the cell by associating with different regulatory particles. Associated with two 19S regulatory particles, forms the 26S proteasome and thus participates in the ATP-dependent degradation of ubiquitinated proteins. The 26S proteasome plays a key role in the maintenance of protein homeostasis by removing misfolded or damaged proteins that could impair cellular functions, and by removing proteins whose functions are no longer required. Associated with the PA200 or PA28, the 20S proteasome mediates ubiquitin-independent protein degradation. This type of proteolysis is required in several pathways including spermatogenesis (20S-PA200 complex) or generation of a subset of MHC class I-presented antigenic peptides (20S-PA28 complex). This Macaca fascicularis (Crab-eating macaque) protein is Proteasome subunit alpha type-4 (PSMA4).